The primary structure comprises 241 residues: Proteasome subunit alpha (241 aa).

This sequence belongs to the peptidase T1A family. In terms of assembly, the 20S proteasome core is composed of 14 alpha and 14 beta subunits that assemble into four stacked heptameric rings, resulting in a barrel-shaped structure. The two inner rings, each composed of seven catalytic beta subunits, are sandwiched by two outer rings, each composed of seven alpha subunits. The catalytic chamber with the active sites is on the inside of the barrel. Has a gated structure, the ends of the cylinder being occluded by the N-termini of the alpha-subunits. Is capped by the proteasome-associated ATPase, ARC.

The protein resides in the cytoplasm. It participates in protein degradation; proteasomal Pup-dependent pathway. Its activity is regulated as follows. The formation of the proteasomal ATPase ARC-20S proteasome complex, likely via the docking of the C-termini of ARC into the intersubunit pockets in the alpha-rings, may trigger opening of the gate for substrate entry. Interconversion between the open-gate and close-gate conformations leads to a dynamic regulation of the 20S proteasome proteolysis activity. In terms of biological role, component of the proteasome core, a large protease complex with broad specificity involved in protein degradation. In Parafrankia sp. (strain EAN1pec), this protein is Proteasome subunit alpha.